The sequence spans 69 residues: UPF0150 protein Ta0767 (69 aa).

This sequence belongs to the UPF0150 family.

The sequence is that of UPF0150 protein Ta0767 from Thermoplasma acidophilum (strain ATCC 25905 / DSM 1728 / JCM 9062 / NBRC 15155 / AMRC-C165).